The primary structure comprises 360 residues: Transcription elongation factor, mitochondrial (360 aa).

Residues 1-35 constitute a mitochondrion transit peptide; sequence MSGSVLFTAGERWRCFLTPSRSSLYWALHNFCCRK.

Belongs to the TEFM family. As to quaternary structure, interacts with POLRMT.

Its subcellular location is the mitochondrion matrix. The protein resides in the mitochondrion nucleoid. Transcription elongation factor which increases mitochondrial RNA polymerase processivity. Regulates transcription of the mitochondrial genome, including genes important for the oxidative phosphorylation machinery. This is Transcription elongation factor, mitochondrial (TEFM) from Homo sapiens (Human).